A 185-amino-acid chain; its full sequence is MIEASKLRAGMTFEAEGKLIRVLEASHHKPGKGNTIMRMKLRDVRTGSTFDTTYRPDEKFEQAIIETVPAQYLYKMDDTAYFMNTETYDQYEIPVANVEQELLYILENSDVKIQFYGTEVIGVQVPTTVELTVTETQPSIKGATVTGSGKPATLETGLVVNVPDFIEVGQKLIINTAEGTYVSRA.

It belongs to the elongation factor P family.

It is found in the cytoplasm. It functions in the pathway protein biosynthesis; polypeptide chain elongation. Involved in peptide bond synthesis. Stimulates efficient translation and peptide-bond synthesis on native or reconstituted 70S ribosomes in vitro. Probably functions indirectly by altering the affinity of the ribosome for aminoacyl-tRNA, thus increasing their reactivity as acceptors for peptidyl transferase. The sequence is that of Elongation factor P from Streptococcus equi subsp. zooepidemicus (strain MGCS10565).